The sequence spans 259 residues: Putative zinc metalloprotease Rip2 (259 aa).

2 helical membrane-spanning segments follow: residues 14 to 34 (PIFL…WIAA) and 39 to 59 (PLSY…SLCL). His60 serves as a coordination point for Zn(2+). Glu61 is an active-site residue. Zn(2+) is bound at residue His64. 4 helical membrane-spanning segments follow: residues 96–116 (LGLP…GAVY), 129–149 (IVSL…LGLT), 159–179 (VFWS…VLNL), and 203–223 (LAPA…TPAL).

The protein belongs to the peptidase M50B family. Zn(2+) is required as a cofactor.

It localises to the cell membrane. The chain is Putative zinc metalloprotease Rip2 (rip2) from Mycolicibacterium smegmatis (strain ATCC 700084 / mc(2)155) (Mycobacterium smegmatis).